The sequence spans 292 residues: Small ribosomal subunit protein uS5 (292 aa).

The interval 1 to 56 is disordered; it reads MADDAGAAGGPGGPGGPGMGGRGGFRGGFGSGIRGRGRGRGRGRGRGRGARGGKAE. A2 carries the post-translational modification N-acetylalanine. The segment covering 7–34 has biased composition (gly residues); that stretch reads AAGGPGGPGGPGMGGRGGFRGGFGSGIR. Residues 35–51 show a composition bias toward basic residues; the sequence is GRGRGRGRGRGRGRGAR. Residues K54 and K58 each participate in a glycyl lysine isopeptide (Lys-Gly) (interchain with G-Cter in ubiquitin) cross-link. An S5 DRBM domain is found at 102-165; sequence LKDEVLKIMP…ILAKLSIVPV (64 aa). The residue at position 251 (T251) is a Phosphothreonine. The residue at position 262 (K262) is an N6-acetyllysine. Position 263 is a phosphoserine (S263). Position 269 is a phosphothreonine (T269). An N6-acetyllysine; alternate modification is found at K274. K274 is covalently cross-linked (Glycyl lysine isopeptide (Lys-Gly) (interchain with G-Cter in SUMO1); alternate). Residue K274 forms a Glycyl lysine isopeptide (Lys-Gly) (interchain with G-Cter in SUMO2); alternate linkage. K274 participates in a covalent cross-link: Glycyl lysine isopeptide (Lys-Gly) (interchain with G-Cter in ubiquitin); alternate. Residue S280 is modified to Phosphoserine.

It belongs to the universal ribosomal protein uS5 family. In terms of assembly, component of the small ribosomal subunit. Interacts with zinc finger protein ZNF277 (via zinc-finger domains); the interaction is direct; the interaction is extra-ribosomal. Interaction with ZNF277 competes with the binding of RPS2 to protein arginine methyltransferase PRMT3. Citrullinated by PADI4 in the Arg/Gly-rich region. Post-translationally, asymmetric arginine dimethylation by PRMT3 occurs at multiple sites in the Arg/Gly-rich region. In terms of processing, monoubiquitinated at Lys-54 and Lys-58 by RNF10 when a ribosome has stalled during translation, leading to its degradation by the proteasome. Deubiquitinated at Lys-54 and Lys-58 by USP10, preventing degradation by the proteasome and promoting 40S ribosome subunit recycling following ribosome dissociation.

It localises to the cytoplasm. The protein localises to the nucleus. It is found in the nucleolus. Functionally, component of the ribosome, a large ribonucleoprotein complex responsible for the synthesis of proteins in the cell. The small ribosomal subunit (SSU) binds messenger RNAs (mRNAs) and translates the encoded message by selecting cognate aminoacyl-transfer RNA (tRNA) molecules. The large subunit (LSU) contains the ribosomal catalytic site termed the peptidyl transferase center (PTC), which catalyzes the formation of peptide bonds, thereby polymerizing the amino acids delivered by tRNAs into a polypeptide chain. The nascent polypeptides leave the ribosome through a tunnel in the LSU and interact with protein factors that function in enzymatic processing, targeting, and the membrane insertion of nascent chains at the exit of the ribosomal tunnel. Plays a role in the assembly and function of the 40S ribosomal subunit. The polypeptide is Small ribosomal subunit protein uS5 (RPS2) (Oryctolagus cuniculus (Rabbit)).